The sequence spans 472 residues: MNQLQDKDRELAPLERKFNHFICSFEQFFKSQATASITLLLAAIAAMVIANSQWHEGYEEISHMAFSISLGDFAISHSLHTWVNDGLMVLFFFLLGLEIKYECLVGDLKDFRDSSLVIAMAIGGMLLPAGIYAGVALTGVDEALRGWGIPMATDTAFALGILALLGSKAPRSAAVTLSALAIVDDMGAVAVIGLFYTENIHLTSLMYAGLTLGGLFALNVLGFRRPIFYLVGGILLWWFVLQSGVHATAAGILAALAVPTKPYAQSTWFATNMRSVLNRFEKNDRKDKSILEQQDQHELVEQAQDIAAMTTTPIQRWGHVLNRPVSLIILPIFAFINAGVALPDDLSKIFDSVVFIGVASAMVLGKVIGISVFAWIAVKSGFSRLPNGLAFGHVFALACLAGVGFTMSLFIASLGFAGHPELLAQAKLGILAGSVIAAIIGTTLFLMIKHKVHEEPKDERHNKAGLPQTDQE.

Helical transmembrane passes span 34–54 (TASITLLLAAIAAMVIANSQW), 86–106 (GLMVLFFFLLGLEIKYECLVG), 116–136 (LVIAMAIGGMLLPAGIYAGVA), 146–166 (GWGIPMATDTAFALGILALLG), 175–195 (VTLSALAIVDDMGAVAVIGLF), 203–223 (TSLMYAGLTLGGLFALNVLGF), 227–247 (IFYLVGGILLWWFVLQSGVHA), 324–344 (PVSLIILPIFAFINAGVALPD), 353–373 (VVFIGVASAMVLGKVIGISVF), 394–414 (VFALACLAGVGFTMSLFIASL), and 428–448 (LGILAGSVIAAIIGTTLFLMI).

It belongs to the NhaA Na(+)/H(+) (TC 2.A.33) antiporter family.

The protein resides in the cell inner membrane. The catalysed reaction is Na(+)(in) + 2 H(+)(out) = Na(+)(out) + 2 H(+)(in). Functionally, na(+)/H(+) antiporter that extrudes sodium in exchange for external protons. This Pseudoalteromonas atlantica (strain T6c / ATCC BAA-1087) protein is Na(+)/H(+) antiporter NhaA 1.